The primary structure comprises 415 residues: MGKIFIIDVTNRDGVQTARLGLSKLEKTLINIYLDEMGIFQSEFGFPTTKHERGYVEANLELAKMGVIKNLRLEGWIRAIVADVDLAFRRAPSLKHLNLSISTSEQMINGKFQGRKVFKDIIEDMTIAVNAAYAKGAETVGVNAEDASRTSIVNLIEFGKAAKEVGATRLRYCDTLGYDNPFTIYETARTLAEKVGMPIEIHCHGDLGMAIGNSLAGAKGVIDGGQDVYVNTTVNGIGERAGNADLVAFLLAILKSKGFGEKYQLGHEVDLSKAWKIARFASYAFDVEIPINQPGVGRNCFAHASGIHADGVIKDSQNYELYGYEELGRGEALMVETGREICAGQYSGISGFRHVMGNMSVELPEDKDEANKILELVRYANVEAHKPLVEDELIFIAKYPEISRRLLTLTPLMND.

Residues 4–275 (IFIIDVTNRD…GHEVDLSKAW (272 aa)) form the Pyruvate carboxyltransferase domain.

Belongs to the alpha-IPM synthase/homocitrate synthase family. Mn(2+) serves as cofactor.

It catalyses the reaction oxaloacetate + acetyl-CoA + H2O = citrate + CoA + H(+). Its activity is regulated as follows. Inhibited by citrate and under aerobic conditions. Functionally, catalyzes the condensation of the acetyl group of acetyl coenzyme A (acetyl-CoA) with oxaloacetate to form citrate. This enzyme is highly Re-face stereospecific with respect to the C-2 of oxaloacetate. This Dehalococcoides mccartyi (strain CBDB1) protein is Citrate (Re)-synthase.